A 102-amino-acid chain; its full sequence is MASEQYQAMRNAPQEEKEELDARAKQGETVVPGGTRGKSLDAQINLAEGRHKGGETRKQQLGTEGYQEMGRKGGLSNSDMSGGERAADEGVTIDESKFRTKN.

The segment at 1 to 102 (MASEQYQAMR…IDESKFRTKN (102 aa)) is disordered. Residues 48-58 (EGRHKGGETRK) show a composition bias toward basic and acidic residues.

The protein belongs to the small hydrophilic plant seed protein family.

Functionally, LEA proteins are late embryonic proteins abundant in higher plant seed embryos. There are two subsets of LEA proteins (5a and 5b), the first ones are expressed when the cotyledon weight reach 80 mg and the second set are expressed above 100 mg. The function of those proteins is not known. This is Late embryogenesis abundant protein D-19 from Gossypium hirsutum (Upland cotton).